Consider the following 738-residue polypeptide: MVHVEMSPEAIATQKPYLDLGLTEAEYDRFAELIGHQPNDTEIGLASGMWSEHCAYKYSKPVLRQFWTKNERVLMGPGEGAGVIDIGEGKAVVFKAESHNHPSAVEPYEGAATGVGGIIRDIFSIGAKPVAMLDSLAFGDIEQPHTQHLVDRIVAGIGGYGNAIGIPTVGGETNFDGSYTRNPLVNAMCVGIMDKDQIQKGKAAGVGNALIYVGAKTGRDGINGASFASGDFSDEEAADRSAVQVGDPFMEKLLMDACLEITGHHQEALVGIQDMGAAGLVSSSVEMAGKANSGMVLDLDLIPQRETEMTPFEIMLSESQERMLLCVRAGFEQEVLAVFADYDLDAAIVGHVIAGHQYQLYHHGKLVCDVPVSSLTDDAPIYHQQGKMPKRLAQPAADFDPIITDPVQIWTDMMAMPTIADKSSLYKRYDAQVQTNTVVLPGSDAAVTRIRGTHRALAMTTDSKGRYLYLDPQVGAAMSVAEAARNLVASGAEPLGITDCLNFGDPTKPEAFYELAEAAKGIIAATKAFNAPVISGNVSLYNETNGEAIYPTPMIGMVGLIEDLSTITTAAFKQADDLIYLVGETHGDFNGSELQKLQTGEVTGKLFDFDLEAEKQHQHFVLKAIREHLITAAHDLSDGGLLVALAEMGFDAQLGAQINVTLPTAWGFSETQGRFLLTVAPENQAAFEALHGPAQLIGRVQAAPEFEVTTVNQHFSASLQQLQTAFEEALPCHMNQKA.

His53 is an active-site residue. ATP contacts are provided by Tyr56 and Lys95. Glu97 is a Mg(2+) binding site. Substrate contacts are provided by residues 98 to 101 (SHNH) and Arg120. His99 (proton acceptor) is an active-site residue. Asp121 is a binding site for Mg(2+). Gln244 contributes to the substrate binding site. Asp274 contacts Mg(2+). 318–320 (ESQ) provides a ligand contact to substrate. Positions 499 and 536 each coordinate ATP. Asn537 serves as a coordination point for Mg(2+). Position 539 (Ser539) interacts with substrate.

This sequence belongs to the FGAMS family. In terms of assembly, monomer. Part of the FGAM synthase complex composed of 1 PurL, 1 PurQ and 2 PurS subunits.

Its subcellular location is the cytoplasm. It carries out the reaction N(2)-formyl-N(1)-(5-phospho-beta-D-ribosyl)glycinamide + L-glutamine + ATP + H2O = 2-formamido-N(1)-(5-O-phospho-beta-D-ribosyl)acetamidine + L-glutamate + ADP + phosphate + H(+). The protein operates within purine metabolism; IMP biosynthesis via de novo pathway; 5-amino-1-(5-phospho-D-ribosyl)imidazole from N(2)-formyl-N(1)-(5-phospho-D-ribosyl)glycinamide: step 1/2. Its function is as follows. Part of the phosphoribosylformylglycinamidine synthase complex involved in the purines biosynthetic pathway. Catalyzes the ATP-dependent conversion of formylglycinamide ribonucleotide (FGAR) and glutamine to yield formylglycinamidine ribonucleotide (FGAM) and glutamate. The FGAM synthase complex is composed of three subunits. PurQ produces an ammonia molecule by converting glutamine to glutamate. PurL transfers the ammonia molecule to FGAR to form FGAM in an ATP-dependent manner. PurS interacts with PurQ and PurL and is thought to assist in the transfer of the ammonia molecule from PurQ to PurL. This chain is Phosphoribosylformylglycinamidine synthase subunit PurL, found in Lacticaseibacillus paracasei (strain ATCC 334 / BCRC 17002 / CCUG 31169 / CIP 107868 / KCTC 3260 / NRRL B-441) (Lactobacillus paracasei).